The following is a 654-amino-acid chain: tRNA 5-methylaminomethyl-2-thiouridine biosynthesis bifunctional protein MnmC (654 aa).

The tRNA (mnm(5)s(2)U34)-methyltransferase stretch occupies residues 1-236 (MPTLLQHAQI…KWEVMSGAYV (236 aa)). Residues 262–654 (IGAGLAGSSS…FGLRRLIRGK (393 aa)) form an FAD-dependent cmnm(5)s(2)U34 oxidoreductase region.

The protein in the N-terminal section; belongs to the methyltransferase superfamily. tRNA (mnm(5)s(2)U34)-methyltransferase family. It in the C-terminal section; belongs to the DAO family. The cofactor is FAD.

It localises to the cytoplasm. The catalysed reaction is 5-aminomethyl-2-thiouridine(34) in tRNA + S-adenosyl-L-methionine = 5-methylaminomethyl-2-thiouridine(34) in tRNA + S-adenosyl-L-homocysteine + H(+). Catalyzes the last two steps in the biosynthesis of 5-methylaminomethyl-2-thiouridine (mnm(5)s(2)U) at the wobble position (U34) in tRNA. Catalyzes the FAD-dependent demodification of cmnm(5)s(2)U34 to nm(5)s(2)U34, followed by the transfer of a methyl group from S-adenosyl-L-methionine to nm(5)s(2)U34, to form mnm(5)s(2)U34. This chain is tRNA 5-methylaminomethyl-2-thiouridine biosynthesis bifunctional protein MnmC, found in Pseudomonas putida (strain ATCC 47054 / DSM 6125 / CFBP 8728 / NCIMB 11950 / KT2440).